A 375-amino-acid chain; its full sequence is Saccharopine dehydrogenase [NAD(+), L-lysine-forming] (375 aa).

L-saccharopine contacts are provided by R18 and K78. The Proton acceptor role is filled by K78. H96 functions as the Proton donor in the catalytic mechanism. Q101 serves as a coordination point for L-saccharopine. An NAD(+)-binding site is contributed by R130. L-saccharopine-binding residues include R131 and F135. NAD(+) contacts are provided by residues 203–204, D227, T231, Y252, and V279; that span reads GR. Cysteines 205 and 250 form a disulfide. 280–282 is a binding site for L-saccharopine; it reads SAD. NAD(+) is bound at residue 322–325; sequence IDHL.

This sequence belongs to the AlaDH/PNT family. As to quaternary structure, monomer.

It catalyses the reaction L-saccharopine + NAD(+) + H2O = L-lysine + 2-oxoglutarate + NADH + H(+). Its pathway is amino-acid biosynthesis; L-lysine biosynthesis via AAA pathway; L-lysine from L-alpha-aminoadipate (fungal route): step 3/3. Catalyzes the NAD(+)-dependent cleavage of saccharopine to L-lysine and 2-oxoglutarate, the final step in the alpha-aminoadipate (AAA) pathway for lysin biosynthesis. The polypeptide is Saccharopine dehydrogenase [NAD(+), L-lysine-forming] (Emericella nidulans (strain FGSC A4 / ATCC 38163 / CBS 112.46 / NRRL 194 / M139) (Aspergillus nidulans)).